The following is a 1055-amino-acid chain: Type I restriction enzyme HindI endonuclease subunit (1055 aa).

The Helicase ATP-binding domain maps to 287–468 (TSEKGDRRIG…QDVFGRYVSI (182 aa)).

The protein belongs to the HsdR family. The type I restriction/modification system is composed of three polypeptides R, M and S; the restriction enzyme has stoichiometry R(2)M(2)S(1) while the methyltransferase is M(2)S(1).

The enzyme catalyses Endonucleolytic cleavage of DNA to give random double-stranded fragments with terminal 5'-phosphates, ATP is simultaneously hydrolyzed.. In terms of biological role, the restriction (R) subunit of a type I restriction enzyme that recognizes 5'-RAACN(5)TAG-3' and cleaves a random distance away. Subunit R is required for both nuclease and ATPase activities, but not for modification. After locating a non-methylated recognition site, the enzyme complex serves as a molecular motor that translocates DNA in an ATP-dependent manner until a collision occurs that triggers cleavage. The sequence is that of Type I restriction enzyme HindI endonuclease subunit from Haemophilus influenzae (strain ATCC 51907 / DSM 11121 / KW20 / Rd).